The chain runs to 194 residues: Holliday junction branch migration complex subunit RuvA (194 aa).

A domain I region spans residues 1 to 64 (MISRLTGKLV…EDAHLLFGFA (64 aa)). Residues 65-143 (TAEERKTFRQ…AHAVTDGLFA (79 aa)) form a domain II region. A flexible linker region spans residues 144 to 147 (AAPA). The tract at residues 147-194 (AADETEDIVGTLLALGYSEREAKAAVKGVPEGTDVGEGVRLALKNLLK) is domain III.

The protein belongs to the RuvA family. In terms of assembly, homotetramer. Forms an RuvA(8)-RuvB(12)-Holliday junction (HJ) complex. HJ DNA is sandwiched between 2 RuvA tetramers; dsDNA enters through RuvA and exits via RuvB. An RuvB hexamer assembles on each DNA strand where it exits the tetramer. Each RuvB hexamer is contacted by two RuvA subunits (via domain III) on 2 adjacent RuvB subunits; this complex drives branch migration. In the full resolvosome a probable DNA-RuvA(4)-RuvB(12)-RuvC(2) complex forms which resolves the HJ.

It localises to the cytoplasm. Functionally, the RuvA-RuvB-RuvC complex processes Holliday junction (HJ) DNA during genetic recombination and DNA repair, while the RuvA-RuvB complex plays an important role in the rescue of blocked DNA replication forks via replication fork reversal (RFR). RuvA specifically binds to HJ cruciform DNA, conferring on it an open structure. The RuvB hexamer acts as an ATP-dependent pump, pulling dsDNA into and through the RuvAB complex. HJ branch migration allows RuvC to scan DNA until it finds its consensus sequence, where it cleaves and resolves the cruciform DNA. In Neisseria meningitidis serogroup A / serotype 4A (strain DSM 15465 / Z2491), this protein is Holliday junction branch migration complex subunit RuvA.